A 179-amino-acid polypeptide reads, in one-letter code: Cytochrome b6-f complex iron-sulfur subunit (179 aa).

The helical transmembrane segment at 21–43 threads the bilayer; the sequence is LLTFGTVTGVALGALYPVVNYFI. Positions 61 to 162 constitute a Rieske domain; the sequence is GNDIIVSEFL…ANVSDDKLVF (102 aa). [2Fe-2S] cluster contacts are provided by cysteine 108, histidine 110, cysteine 126, and histidine 129. An intrachain disulfide couples cysteine 113 to cysteine 128.

It belongs to the Rieske iron-sulfur protein family. In terms of assembly, the 4 large subunits of the cytochrome b6-f complex are cytochrome b6, subunit IV (17 kDa polypeptide, PetD), cytochrome f and the Rieske protein, while the 4 small subunits are PetG, PetL, PetM and PetN. The complex functions as a dimer. It depends on [2Fe-2S] cluster as a cofactor.

The protein localises to the cellular thylakoid membrane. It carries out the reaction 2 oxidized [plastocyanin] + a plastoquinol + 2 H(+)(in) = 2 reduced [plastocyanin] + a plastoquinone + 4 H(+)(out). In terms of biological role, component of the cytochrome b6-f complex, which mediates electron transfer between photosystem II (PSII) and photosystem I (PSI), cyclic electron flow around PSI, and state transitions. The sequence is that of Cytochrome b6-f complex iron-sulfur subunit from Trichodesmium erythraeum (strain IMS101).